The following is a 351-amino-acid chain: Glucose 1-dehydrogenase 1 (351 aa).

Residue C39 participates in Zn(2+) binding. Residue T41 coordinates substrate. Zn(2+) contacts are provided by H64 and E65. Residues E113 and E149 each coordinate substrate. A Zn(2+)-binding site is contributed by E149. Residues 182–185 (AGPI), 265–267 (LGI), and 292–294 (ATN) each bind NADP(+). N294 serves as a coordination point for substrate.

This sequence belongs to the zinc-containing alcohol dehydrogenase family. Glucose 1-dehydrogenase subfamily. Zn(2+) is required as a cofactor.

The catalysed reaction is D-glucose + NAD(+) = D-glucono-1,5-lactone + NADH + H(+). It carries out the reaction D-glucose + NADP(+) = D-glucono-1,5-lactone + NADPH + H(+). Its function is as follows. Catalyzes the NAD(P)(+)-dependent oxidation of D-glucose to D-gluconate via gluconolactone. Can utilize both NAD(+) and NADP(+) as electron acceptor. Is involved in the degradation of glucose through a non-phosphorylative variant of the Entner-Doudoroff pathway. The sequence is that of Glucose 1-dehydrogenase 1 from Vulcanisaeta moutnovskia (strain 768-28).